Reading from the N-terminus, the 756-residue chain is Disintegrin and metalloproteinase domain-containing protein 5 (756 aa).

The first 16 residues, 1 to 16 (MFLLLVLLTGLGGMHA), serve as a signal peptide directing secretion. A propeptide spanning residues 17–142 (DLNPHKTFLQ…AVSGFIHKIY (126 aa)) is cleaved from the precursor. At 17 to 698 (DLNPHKTFLQ…GRHAPFQKQR (682 aa)) the chain is on the extracellular side. One can recognise a Peptidase M12B domain in the interval 183-380 (RYIEMHIVVD…NGLTCLQTNP (198 aa)). 4 disulfides stabilise this stretch: Cys292/Cys375, Cys334/Cys359, Cys336/Cys341, and Cys449/Cys470. One can recognise a Disintegrin domain in the interval 389 to 478 (RRICGNGLLE…YCLLDTYVRD (90 aa)). Asn559 carries an N-linked (GlcNAc...) asparagine glycan. Residues 630 to 664 (DFETCEASIECSGHGICNNFNHCHCEKGYNPPHCK) form the EGF-like domain. 3 disulfide bridges follow: Cys634–Cys646, Cys640–Cys652, and Cys654–Cys663. A helical membrane pass occupies residues 699–719 (FQLIFYISLPVLIITTAILIK). The Cytoplasmic portion of the chain corresponds to 720-756 (RKKLRELCYRGETESESSVSQESSSNSKSSLSESTSL). Residues 731 to 756 (ETESESSVSQESSSNSKSSLSESTSL) are disordered. The span at 735-756 (ESSVSQESSSNSKSSLSESTSL) shows a compositional bias: low complexity.

In terms of assembly, interacts with TEX101. In terms of processing, subject to proteolytic processing during epididymal transit of spermatozoa. As to expression, detected in testis (at protein level). Detected in adult and prepubertal testis. Detected at very low levels in heart, kidney, brain, muscle ovary and uterus.

The protein localises to the membrane. Its function is as follows. This is a non catalytic metalloprotease-like protein. May play a role in sperm-egg fusion. This is Disintegrin and metalloproteinase domain-containing protein 5 (ADAM5) from Macaca fascicularis (Crab-eating macaque).